The following is a 434-amino-acid chain: D-amino acid dehydrogenase (434 aa).

An FAD-binding site is contributed by V3–Y17.

Belongs to the DadA oxidoreductase family. It depends on FAD as a cofactor.

It carries out the reaction a D-alpha-amino acid + A + H2O = a 2-oxocarboxylate + AH2 + NH4(+). The protein operates within amino-acid degradation; D-alanine degradation; NH(3) and pyruvate from D-alanine: step 1/1. In terms of biological role, oxidative deamination of D-amino acids. In Pseudomonas entomophila (strain L48), this protein is D-amino acid dehydrogenase.